The chain runs to 136 residues: MGKFMKPGKVVMVLAGRYAGRKAVIVKNIDDGTADRPYSHALVSGIDRYPRKVTATMGKKKVAKRSKIKAFVKVFNYNHLMPTRYSVDIPLDKTIVNKDVFRDPALKRKARREAKVKFEERYKTGKNKWFFQKLRF.

The region spanning 5–40 (MKPGKVVMVLAGRYAGRKAVIVKNIDDGTADRPYSH) is the KOW domain.

It belongs to the eukaryotic ribosomal protein eL27 family. In terms of assembly, component of the large ribosomal subunit.

The protein localises to the cytoplasm. Its subcellular location is the cytosol. It localises to the rough endoplasmic reticulum. Functionally, component of the large ribosomal subunit. In Ictalurus punctatus (Channel catfish), this protein is Large ribosomal subunit protein eL27 (rpl27).